The chain runs to 2078 residues: Nascent polypeptide-associated complex subunit alpha, muscle-specific form (2078 aa).

4 disordered regions span residues 1 to 21 (MPGE…QPQA), 37 to 96 (ALGQ…LGTA), 595 to 614 (LGEP…PLGV), and 732 to 1944 (KSVP…KAMS). Composition is skewed to polar residues over residues 9 to 21 (VPAT…QPQA) and 60 to 75 (AANQ…TIAS). The segment covering 775 to 786 (SGASATASSKGT) has biased composition (low complexity). A compositionally biased stretch (polar residues) spans 837–847 (PENSLSFQGSK). S917 is modified (phosphoserine). The span at 933-1020 (SPSPKGAPTP…PPAVTPPSPK (88 aa)) shows a compositional bias: pro residues. Residues 1045-1067 (GSPAATPLPKGAPTTPAATLPSP) are compositionally biased toward low complexity. The segment covering 1080–1113 (PTPPAATPPSPKGGPATPSPKGAPMPPAATPPSP) has biased composition (pro residues). Low complexity predominate over residues 1114–1130 (KGGLATPPHKGAPTTPA). Composition is skewed to pro residues over residues 1131–1147 (ATPP…PPKG) and 1154–1170 (ATPP…PPKG). At S1181 the chain carries Phosphoserine. Low complexity-rich tracts occupy residues 1183 to 1199 (KGGL…TTPA), 1206 to 1222 (KGGL…TTPA), and 1229 to 1245 (KGGL…TTPA). 2 stretches are compositionally biased toward pro residues: residues 1246–1270 (ATPP…PAAT) and 1292–1344 (VTPP…PSPK). Low complexity predominate over residues 1345–1366 (GTPTLPATTPSSKGGPTTPSSK). S1397 and S1474 each carry phosphoserine. Positions 1470 to 1481 (VTPPSPKEPPAP) are enriched in pro residues. Over residues 1485–1507 (ATSSSPKKAPATPAPMGAPTLPA) the composition is skewed to low complexity. A compositionally biased stretch (pro residues) spans 1611–1625 (KEAPTPPAVTPPSPE). Residues 1626–1637 (KGPATPAPKGTP) are compositionally biased toward low complexity. The segment covering 1647–1656 (LKDSPTSPAS) has biased composition (polar residues). A compositionally biased stretch (basic and acidic residues) spans 1744–1756 (DSSKTAKGKDASH). The span at 1794–1811 (PSPPVSLPLAPSPVPTLP) shows a compositional bias: pro residues. Residues 1841–1845 (LPLIP) carry the PXLXP motif. A compositionally biased stretch (polar residues) spans 1876-1891 (SAKQPVTKNNKGSGTE). The segment covering 1892–1905 (SDSDESVPELEEQD) has biased composition (acidic residues). S1906 bears the Phosphoserine; by ILK1 mark. Residues 1907 to 1920 (TQATTQQAQLAAAA) are compositionally biased toward low complexity. Positions 1932 to 1943 (QSRSEKKARKAM) are required for DNA-binding. Positions 1933 to 1998 (SRSEKKARKA…AKIEDLSQQA (66 aa)) constitute an NAC-A/B domain. Residue S1995 is modified to Phosphoserine. K2005 is modified (N6-acetyllysine; alternate). K2005 participates in a covalent cross-link: Glycyl lysine isopeptide (Lys-Gly) (interchain with G-Cter in SUMO2); alternate. T2022 is subject to Phosphothreonine; by GSK3-beta. Position 2024 is a phosphothreonine (T2024). A phosphoserine mark is found at S2029, S2049, S2054, and S2066. The region spanning 2039–2078 (VEVKDIELVMSQANVSRAKAVRALKNNSNDIVNAIMELTM) is the UBA domain.

As to quaternary structure, interacts (via PXLXP motif) with the muscle-restricted histone methyltransferase SMYD1 (via MYND-type zinc finger).

The protein localises to the cytoplasm. The protein resides in the nucleus. Cardiac- and muscle-specific transcription factor. May act to regulate the expression of genes involved in the development of myotubes. Plays a critical role in ventricular cardiomyocyte expansion and regulates postnatal skeletal muscle growth and regeneration. Involved in the organized assembly of thick and thin filaments of myofibril sarcomeres. This is Nascent polypeptide-associated complex subunit alpha, muscle-specific form (NACA) from Homo sapiens (Human).